The primary structure comprises 124 residues: Small ribosomal subunit protein uS12 (124 aa).

Positions 8–28 (IRSAREKTDKKTKSPALKSCP) are disordered. A compositionally biased stretch (basic and acidic residues) spans 10–19 (SAREKTDKKT). A 3-methylthioaspartic acid modification is found at Asp-89.

Belongs to the universal ribosomal protein uS12 family. Part of the 30S ribosomal subunit. Contacts proteins S8 and S17. May interact with IF1 in the 30S initiation complex.

In terms of biological role, with S4 and S5 plays an important role in translational accuracy. Its function is as follows. Interacts with and stabilizes bases of the 16S rRNA that are involved in tRNA selection in the A site and with the mRNA backbone. Located at the interface of the 30S and 50S subunits, it traverses the body of the 30S subunit contacting proteins on the other side and probably holding the rRNA structure together. The combined cluster of proteins S8, S12 and S17 appears to hold together the shoulder and platform of the 30S subunit. This is Small ribosomal subunit protein uS12 from Arthrospira platensis (Spirulina platensis).